The following is a 136-amino-acid chain: uncharacterized protein (136 aa).

The protein localises to the cytoplasm. The protein resides in the nucleus. This is an uncharacterized protein from Schizosaccharomyces pombe (strain 972 / ATCC 24843) (Fission yeast).